Reading from the N-terminus, the 262-residue chain is Expansin-A7 (262 aa).

The signal sequence occupies residues 1–30 (MGPISSSWSFNKFFSIVFVVFAISGEFVAG). An Expansin-like EG45 domain is found at 55 to 167 (GGACGYGNLF…RRVPCQRSGG (113 aa)). Disulfide bonds link Cys-58/Cys-86, Cys-89/Cys-162, and Cys-94/Cys-100. Positions 177 to 257 (YWLLIFVMNV…NWSGGKTYKS (81 aa)) constitute an Expansin-like CBD domain.

It belongs to the expansin family. Expansin A subfamily.

The protein resides in the secreted. It is found in the cell wall. Its subcellular location is the membrane. Causes loosening and extension of plant cell walls by disrupting non-covalent bonding between cellulose microfibrils and matrix glucans. No enzymatic activity has been found. The sequence is that of Expansin-A7 (EXPA7) from Arabidopsis thaliana (Mouse-ear cress).